The following is a 320-amino-acid chain: Lipoyl synthase (320 aa).

The segment covering 1-29 (MIGKLVRDLKIPDQRHPEKAHRPDNDQPR) has biased composition (basic and acidic residues). The segment at 1–32 (MIGKLVRDLKIPDQRHPEKAHRPDNDQPRKPS) is disordered. Residues C60, C65, C71, C86, C90, C93, and S300 each contribute to the [4Fe-4S] cluster site. One can recognise a Radical SAM core domain in the interval 71 to 289 (CWGQGHATMM…EKAAYGKGFL (219 aa)).

This sequence belongs to the radical SAM superfamily. Lipoyl synthase family. It depends on [4Fe-4S] cluster as a cofactor.

Its subcellular location is the cytoplasm. It catalyses the reaction [[Fe-S] cluster scaffold protein carrying a second [4Fe-4S](2+) cluster] + N(6)-octanoyl-L-lysyl-[protein] + 2 oxidized [2Fe-2S]-[ferredoxin] + 2 S-adenosyl-L-methionine + 4 H(+) = [[Fe-S] cluster scaffold protein] + N(6)-[(R)-dihydrolipoyl]-L-lysyl-[protein] + 4 Fe(3+) + 2 hydrogen sulfide + 2 5'-deoxyadenosine + 2 L-methionine + 2 reduced [2Fe-2S]-[ferredoxin]. It functions in the pathway protein modification; protein lipoylation via endogenous pathway; protein N(6)-(lipoyl)lysine from octanoyl-[acyl-carrier-protein]: step 2/2. Catalyzes the radical-mediated insertion of two sulfur atoms into the C-6 and C-8 positions of the octanoyl moiety bound to the lipoyl domains of lipoate-dependent enzymes, thereby converting the octanoylated domains into lipoylated derivatives. The sequence is that of Lipoyl synthase from Cereibacter sphaeroides (strain ATCC 17025 / ATH 2.4.3) (Rhodobacter sphaeroides).